The following is a 431-amino-acid chain: MTQLKQARKGIVTPEMEAVAKTEGLQPEFILKGIADGNIVIPVNKLRKNLKLCGIGKGLSTKVNANIGTSTDFGSVASEVEKLKMAEMVGADTIMDLSTGPKINTIRKAILENTCLPLGTVPVYQAAVEAKDRYGAMVKMTADDLFGAIESQAREGVDFVTVHCGVTRQVIDTFKGQGRLTDIVSRGGTFTAGWMVFHGAENPLYEHFDRLLDICREYDVTLSLGDGLRPGCIADATDRAQVAELLVLGELVKRAREAEVQVMVEGPGHVPLNQIEANVRLQKSICEDAPFYVLGPLVTDIAPGYDHITGAIGGAIAAAAGADFLCYVTPAEHLSLPDVTDVRNGVIASRIAAHAADIVKGVNGAAERDRQMAIARKKLDWETQLKLSLDPEHARVTRDRFKTRGKACSMCGDFCAMELAEKHLGVSVSRC.

Substrate contacts are provided by residues N66, M95, Y124, H163, 185–187, 226–229, and E265; these read SRG and DGLR. Residue H269 participates in Zn(2+) binding. A substrate-binding site is contributed by Y292. Position 333 (H333) interacts with Zn(2+). Residues C408, C411, and C415 each contribute to the [4Fe-4S] cluster site.

The protein belongs to the ThiC family. Requires [4Fe-4S] cluster as cofactor.

The catalysed reaction is 5-amino-1-(5-phospho-beta-D-ribosyl)imidazole + S-adenosyl-L-methionine = 4-amino-2-methyl-5-(phosphooxymethyl)pyrimidine + CO + 5'-deoxyadenosine + formate + L-methionine + 3 H(+). Its pathway is cofactor biosynthesis; thiamine diphosphate biosynthesis. Catalyzes the synthesis of the hydroxymethylpyrimidine phosphate (HMP-P) moiety of thiamine from aminoimidazole ribotide (AIR) in a radical S-adenosyl-L-methionine (SAM)-dependent reaction. This chain is Phosphomethylpyrimidine synthase, found in Dehalococcoides mccartyi (strain ATCC BAA-2100 / JCM 16839 / KCTC 5957 / BAV1).